We begin with the raw amino-acid sequence, 490 residues long: Probable cytosol aminopeptidase (490 aa).

Residues lysine 262 and aspartate 267 each coordinate Mn(2+). The active site involves lysine 274. Mn(2+) contacts are provided by aspartate 285, aspartate 344, and glutamate 346. Arginine 348 is a catalytic residue.

Belongs to the peptidase M17 family. Mn(2+) is required as a cofactor.

It localises to the cytoplasm. The catalysed reaction is Release of an N-terminal amino acid, Xaa-|-Yaa-, in which Xaa is preferably Leu, but may be other amino acids including Pro although not Arg or Lys, and Yaa may be Pro. Amino acid amides and methyl esters are also readily hydrolyzed, but rates on arylamides are exceedingly low.. It carries out the reaction Release of an N-terminal amino acid, preferentially leucine, but not glutamic or aspartic acids.. Presumably involved in the processing and regular turnover of intracellular proteins. Catalyzes the removal of unsubstituted N-terminal amino acids from various peptides. The chain is Probable cytosol aminopeptidase from Mannheimia succiniciproducens (strain KCTC 0769BP / MBEL55E).